Here is a 32-residue protein sequence, read N- to C-terminus: Photosystem II reaction center protein Z (32 aa).

The chain crosses the membrane as a helical span at residues 9 to 31 (FILIGSASWAALVLLVGSLNSFV).

It belongs to the PsbZ family. As to quaternary structure, PSII is composed of 1 copy each of membrane proteins PsbA, PsbB, PsbC, PsbD, PsbE, PsbF, PsbH, PsbI, PsbJ, PsbK, PsbL, PsbM, PsbT, PsbY, PsbZ, Psb30/Ycf12, at least 3 peripheral proteins of the oxygen-evolving complex and a large number of cofactors. It forms dimeric complexes.

Its subcellular location is the plastid. It localises to the chloroplast thylakoid membrane. May control the interaction of photosystem II (PSII) cores with the light-harvesting antenna, regulates electron flow through the 2 photosystem reaction centers. PSII is a light-driven water plastoquinone oxidoreductase, using light energy to abstract electrons from H(2)O, generating a proton gradient subsequently used for ATP formation. This is Photosystem II reaction center protein Z from Euglena viridis (Cercaria viridis).